The chain runs to 300 residues: 4-hydroxy-tetrahydrodipicolinate synthase (300 aa).

Residue Thr-45 coordinates pyruvate. Tyr-140 functions as the Proton donor/acceptor in the catalytic mechanism. Lys-169 functions as the Schiff-base intermediate with substrate in the catalytic mechanism. Ile-210 is a binding site for pyruvate.

Belongs to the DapA family. In terms of assembly, homotetramer; dimer of dimers.

It localises to the cytoplasm. It catalyses the reaction L-aspartate 4-semialdehyde + pyruvate = (2S,4S)-4-hydroxy-2,3,4,5-tetrahydrodipicolinate + H2O + H(+). Its pathway is amino-acid biosynthesis; L-lysine biosynthesis via DAP pathway; (S)-tetrahydrodipicolinate from L-aspartate: step 3/4. Its function is as follows. Catalyzes the condensation of (S)-aspartate-beta-semialdehyde [(S)-ASA] and pyruvate to 4-hydroxy-tetrahydrodipicolinate (HTPA). The protein is 4-hydroxy-tetrahydrodipicolinate synthase of Helicobacter pylori (strain HPAG1).